Here is a 61-residue protein sequence, read N- to C-terminus: Metallothionein-1C (61 aa).

Positions 1–29 (MDPNCSCSTGSSCSCAGSCTCKACRCPSC) are beta. A divalent metal cation contacts are provided by Cys5, Cys7, Cys13, Cys15, Cys19, Cys21, Cys24, Cys26, Cys29, Cys33, Cys34, Cys36, Cys37, Cys41, Cys44, Cys48, Cys50, Cys57, Cys59, and Cys60. An alpha region spans residues 30 to 61 (KKSCCSCCPVGCAKCAQGCICKGASDKCSCCA).

This sequence belongs to the metallothionein superfamily. Type 1 family.

Metallothioneins have a high content of cysteine residues that bind various heavy metals; these proteins are transcriptionally regulated by both heavy metals and glucocorticoids. The polypeptide is Metallothionein-1C (MT1C) (Ovis aries (Sheep)).